The following is a 189-amino-acid chain: MTVRDVDVPIPEQPGAPYPIVTKCCDIVCGFGRGSSELGIPTANVPVDQLPEVVNKLELGVYFGYAKVTPVAHDLEQVEREDGRVVSYNYGSHLEEDNGDLEVLPVVLSVGKNPFYHNDFKTVEIHILHDFKSTFYGAKIKFNILGYVRPELDYTSKEALIEDIKTDIEISKQVLDTEPYRAHMAELLK.

Residues threonine 42 and asparagine 44 each coordinate Mg(2+). The Nucleophile role is filled by glutamate 124.

It belongs to the flavokinase family. Zn(2+) is required as a cofactor. The cofactor is Mg(2+).

The enzyme catalyses riboflavin + ATP = FMN + ADP + H(+). It participates in cofactor biosynthesis; FMN biosynthesis; FMN from riboflavin (ATP route): step 1/1. Its function is as follows. Catalyzes the phosphorylation of riboflavin (vitamin B2) to form flavin mononucleotide (FMN) coenzyme. In Candida glabrata (strain ATCC 2001 / BCRC 20586 / JCM 3761 / NBRC 0622 / NRRL Y-65 / CBS 138) (Yeast), this protein is Riboflavin kinase (FMN1).